Consider the following 314-residue polypeptide: Homoserine kinase (314 aa).

ATP is bound at residue 95 to 105 (PHSRGLGSSAS).

It belongs to the GHMP kinase family. Homoserine kinase subfamily.

The protein resides in the cytoplasm. It carries out the reaction L-homoserine + ATP = O-phospho-L-homoserine + ADP + H(+). It functions in the pathway amino-acid biosynthesis; L-threonine biosynthesis; L-threonine from L-aspartate: step 4/5. Functionally, catalyzes the ATP-dependent phosphorylation of L-homoserine to L-homoserine phosphate. This chain is Homoserine kinase, found in Rhodococcus opacus (strain B4).